A 201-amino-acid chain; its full sequence is tRNA (guanine-N(7)-)-methyltransferase (201 aa).

S-adenosyl-L-methionine is bound by residues Glu34, Glu59, Asp86, and Asp107. Asp107 is a catalytic residue. Substrate is bound by residues Lys111, Asp143, and 181 to 184; that span reads TDYE.

The protein belongs to the class I-like SAM-binding methyltransferase superfamily. TrmB family.

It catalyses the reaction guanosine(46) in tRNA + S-adenosyl-L-methionine = N(7)-methylguanosine(46) in tRNA + S-adenosyl-L-homocysteine. It participates in tRNA modification; N(7)-methylguanine-tRNA biosynthesis. Functionally, catalyzes the formation of N(7)-methylguanine at position 46 (m7G46) in tRNA. The protein is tRNA (guanine-N(7)-)-methyltransferase of Mycoplasma mobile (strain ATCC 43663 / 163K / NCTC 11711) (Mesomycoplasma mobile).